We begin with the raw amino-acid sequence, 161 residues long: Ferredoxin/F(420)H(2)-dependent CoB-CoM heterodisulfide reductase subunit C (161 aa).

4Fe-4S ferredoxin-type domains follow at residues 10–40 (KAEGLDLLSCMHCGICTGSCPSGRHTGLNTR) and 51–82 (AAVLSDYDLWLCTTCYTCQERCPRGIPITDAI). Residues Cys19, Cys22, Cys25, Cys29, Cys62, Cys65, Cys68, and Cys72 each coordinate [4Fe-4S] cluster.

The protein belongs to the HdrC family. As to quaternary structure, the ferredoxin/F(420)H(2)-dependent CoB-CoM heterodisulfide reductase is composed of three subunits; HdrA2, HdrB2 and HdrC2. It depends on [4Fe-4S] cluster as a cofactor.

The protein resides in the cytoplasm. The enzyme catalyses coenzyme B + coenzyme M + 2 oxidized [2Fe-2S]-[ferredoxin] = coenzyme M-coenzyme B heterodisulfide + 2 reduced [2Fe-2S]-[ferredoxin] + 2 H(+). It carries out the reaction coenzyme B + 2 oxidized coenzyme F420-(gamma-L-Glu)(n) + coenzyme M + 2 reduced [2Fe-2S]-[ferredoxin] + 4 H(+) = coenzyme M-coenzyme B heterodisulfide + 2 reduced coenzyme F420-(gamma-L-Glu)(n) + 2 oxidized [2Fe-2S]-[ferredoxin]. Its pathway is cofactor metabolism; coenzyme M-coenzyme B heterodisulfide reduction; coenzyme B and coenzyme M from coenzyme M-coenzyme B heterodisulfide: step 1/1. Part of a complex that catalyzes the reversible reduction of CoM-S-S-CoB to the thiol-coenzymes H-S-CoM (coenzyme M) and H-S-CoB (coenzyme B). Catalyzes the transfer of electrons from ferredoxin to CoM-S-S-CoB during methanogenesis from acetate. Electrons transfer from ferredoxin to CoM-S-S-CoB via HdrA2, HdrC2 and HdrB2. In addition, the complex can use electron bifurcation to direct electron pairs from reduced coenzyme F420 towards the reduction of both ferredoxin and CoB-CoM heterodisulfide. This activity may take place during Fe(III)-dependent anaerobic methane oxidation. The sequence is that of Ferredoxin/F(420)H(2)-dependent CoB-CoM heterodisulfide reductase subunit C from Methanosarcina acetivorans (strain ATCC 35395 / DSM 2834 / JCM 12185 / C2A).